We begin with the raw amino-acid sequence, 460 residues long: Ammonium transporter Rh type B-B (460 aa).

The Cytoplasmic portion of the chain corresponds to 1–10; sequence MTSYSTNMRI. The chain crosses the membrane as a helical span at residues 11 to 31; it reads KLPLFCLLLQFITIILFAVFV. Residues 32-62 lie on the Extracellular side of the membrane; that stretch reads RYDHESDARGWHEELNNHSSSNADNDFYYRY. N48 is a glycosylation site (N-linked (GlcNAc...) asparagine). Residues 63 to 83 traverse the membrane as a helical segment; it reads PSFQDVHVMIFIGFGFLMTFL. Residues 84-87 are Cytoplasmic-facing; sequence KRYG. Residues 88 to 108 form a helical membrane-spanning segment; the sequence is FSSVAFNFLIAAFGLQWSTLI. The Extracellular portion of the chain corresponds to 109–125; that stretch reads QGFFHGFHDGKIHVGIE. The helical transmembrane segment at 126–146 threads the bilayer; sequence SMINADFCTGAVLISFGAVLG. Residues 147–150 lie on the Cytoplasmic side of the membrane; that stretch reads KTSP. Residues 151-171 form a helical membrane-spanning segment; sequence VQLIIMTLVEVTLFGINEYII. Topologically, residues 172–179 are extracellular; the sequence is LNIVGAKD. Residues 180 to 202 form a helical membrane-spanning segment; that stretch reads AGGSMTIHTFGAYFGLIVSRVLY. The Cytoplasmic segment spans residues 203 to 220; sequence REDLEKSRQREGSVYHSD. The chain crosses the membrane as a helical span at residues 221–241; the sequence is LFAMIGTIYLWMFWPSFNSAV. At 242 to 252 the chain is on the extracellular side; sequence TAHGDDQHRTV. Residues 253–273 traverse the membrane as a helical segment; sequence MNTYYSLAACTLATFGFSALL. Topologically, residues 274-283 are cytoplasmic; that stretch reads NGEGKLDMVH. Residues 284–304 form a helical membrane-spanning segment; it reads IQNAALAGGVAVGTSGEMMLT. P305 is a topological domain (extracellular). A helical membrane pass occupies residues 306–326; it reads FGAMIAGTLAGMISVLGYKYL. At 327–347 the chain is on the cytoplasmic side; sequence TPVLDSKLKIQDTCGVHNLHG. A helical transmembrane segment spans residues 348–368; the sequence is MPGILGAIIGAIVALFATADI. At 369–394 the chain is on the extracellular side; that stretch reads YGDGMGDVFPLISDGSRTAKQQSLYQ. A helical membrane pass occupies residues 395 to 415; that stretch reads FLALLVALGFAIIGGTVVGFI. Over 416 to 460 the chain is Cytoplasmic; sequence LKLPIFGTPSDAECFEDAIYWEVPGGEGHQQLTVVINNEDPDTQA.

Belongs to the ammonium transporter (TC 2.A.49) family. Rh subfamily.

Its subcellular location is the basolateral cell membrane. It is found in the cytoplasmic vesicle membrane. Functions as a specific ammonium transporter. This is Ammonium transporter Rh type B-B (rhbg-b) from Xenopus laevis (African clawed frog).